Consider the following 108-residue polypeptide: TYRO protein tyrosine kinase-binding protein (108 aa).

A signal peptide spans 1 to 25; sequence MEGLRPSDRLLSLLLTVGGLSLVLA. Residues 26 to 36 lie on the Extracellular side of the membrane; it reads QSECNCSSVSP. A helical transmembrane segment spans residues 37-57; it reads GVLAGIVLGDLMLTLLIALAV. Position 46 (Asp-46) interacts with Ca(2+). Residues 58 to 108 are Cytoplasmic-facing; that stretch reads YYLGRLVPRGRGATEVTRKQHIPETESPYQELQGQRTDVYSDLNTQRPYYK. Residues 71-108 form a disordered region; the sequence is TEVTRKQHIPETESPYQELQGQRTDVYSDLNTQRPYYK. Residues 75–103 enclose the ITAM domain; sequence RKQHIPETESPYQELQGQRTDVYSDLNTQ. The span at 84–108 shows a compositional bias: polar residues; sequence SPYQELQGQRTDVYSDLNTQRPYYK. A phosphotyrosine mark is found at Tyr-86 and Tyr-97.

Belongs to the TYROBP family. In terms of assembly, homodimer; disulfide-linked. Homotrimer; disulfide-linked. Homotetramer; disulfide-linked. Homotrimers and homotetramers form when low levels of partner receptors are available and is competitive with assembly with interacting receptors. They may represent alternative oligomerization states or may be intermediates in the receptor assembly process. Binding of a metal cation aids in homooligomerization through coordination of the metal ion by the subunits of the oligomer. Interacts with TREM1. Interacts with TREM2. Interacts with CLECSF5. Interacts with CD300LB and CD300C2. Interacts with CD300E. Interacts (via ITAM domain) with SYK (via SH2 domains); activates SYK mediating neutrophils and macrophages integrin-mediated activation. Interacts with KLRC2. Interacts with CD300H. Interacts with KLRD1. Interacts with SIGLEC1. Following ligand binding by associated receptors, tyrosine phosphorylated in the ITAM domain which leads to activation of additional tyrosine kinases and subsequent cell activation.

The protein localises to the cell membrane. Functionally, adapter protein which non-covalently associates with activating receptors found on the surface of a variety of immune cells to mediate signaling and cell activation following ligand binding by the receptors. TYROBP is tyrosine-phosphorylated in the ITAM domain following ligand binding by the associated receptors which leads to activation of additional tyrosine kinases and subsequent cell activation. Also has an inhibitory role in some cells. Non-covalently associates with activating receptors of the CD300 family to mediate cell activation. Also mediates cell activation through association with activating receptors of the CD200R family. Required for neutrophil activation mediated by integrin. Required for the activation of myeloid cells mediated by the CLEC5A/MDL1 receptor. Associates with natural killer (NK) cell receptors such as the KLRD1/KLRC2 heterodimer to mediate NK cell activation. Associates with TREM1 to mediate activation of neutrophils and monocytes. Associates with TREM2 on monocyte-derived dendritic cells to mediate up-regulation of chemokine receptor CCR7 and dendritic cell maturation and survival. Association with TREM2 mediates cytokine-induced formation of multinucleated giant cells which are formed by the fusion of macrophages. Stabilizes the TREM2 C-terminal fragment (TREM2-CTF) produced by TREM2 ectodomain shedding which suppresses the release of pro-inflammatory cytokines. In microglia, required with TREM2 for phagocytosis of apoptotic neurons. Required with ITGAM/CD11B in microglia to control production of microglial superoxide ions which promote the neuronal apoptosis that occurs during brain development. Promotes pro-inflammatory responses in microglia following nerve injury which accelerates degeneration of injured neurons. Positively regulates the expression of the IRAK3/IRAK-M kinase and IL10 production by liver dendritic cells and inhibits their T cell allosimulatory ability. Negatively regulates B cell proliferation. Required for CSF1-mediated osteoclast cytoskeletal organization. Positively regulates multinucleation during osteoclast development. This is TYRO protein tyrosine kinase-binding protein from Bos taurus (Bovine).